A 136-amino-acid chain; its full sequence is UPF0213 protein ASA_0550 (136 aa).

The region spanning 17-92 is the GIY-YIG domain; the sequence is GQWSIYLVRT…KQQSKAFKER (76 aa).

Belongs to the UPF0213 family.

In Aeromonas salmonicida (strain A449), this protein is UPF0213 protein ASA_0550.